We begin with the raw amino-acid sequence, 466 residues long: Fumarate hydratase class II (466 aa).

Substrate contacts are provided by residues 100–102 (SGT), R128, 131–134 (HPND), 141–143 (STN), and T189. H190 serves as the catalytic Proton donor/acceptor. S320 is an active-site residue. Residues S321 and 326–328 (KVN) each bind substrate.

It belongs to the class-II fumarase/aspartase family. Fumarase subfamily. As to quaternary structure, homotetramer.

It localises to the cytoplasm. It carries out the reaction (S)-malate = fumarate + H2O. It functions in the pathway carbohydrate metabolism; tricarboxylic acid cycle; (S)-malate from fumarate: step 1/1. In terms of biological role, involved in the TCA cycle. Catalyzes the stereospecific interconversion of fumarate to L-malate. This chain is Fumarate hydratase class II, found in Prochlorococcus marinus (strain MIT 9313).